A 239-amino-acid polypeptide reads, in one-letter code: Ribosomal RNA small subunit methyltransferase G (239 aa).

S-adenosyl-L-methionine-binding positions include Gly77, Phe82, 128–129, and Arg147; that span reads AE.

The protein belongs to the methyltransferase superfamily. RNA methyltransferase RsmG family.

It localises to the cytoplasm. Functionally, specifically methylates the N7 position of guanine in position 535 of 16S rRNA. The protein is Ribosomal RNA small subunit methyltransferase G of Bacillus cereus (strain ZK / E33L).